The primary structure comprises 439 residues: Packaging protein 1 (439 aa).

The span at 1–23 shows a compositional bias: polar residues; sequence MSTQIPARQETYDPSQSSGTKTP. Residues 1-42 form a disordered region; sequence MSTQIPARQETYDPSQSSGTKTPSHPYDGNPTRSYPKRNAGK. ATP is bound at residue 151-158; the sequence is GPTGSGKS. A DNA-binding region spans residues 419–439; that stretch reads ERNPKLTDLEKLSPPGTFQET.

It belongs to the adenoviridae packaging protein 1 family. Homodimer. Part of a genome packaging complex composed of packaging proteins 1, 2 and 3; this complex specifically binds to the packaging sequence on the left end of viral genomic DNA and performs packaging of the viral genome. Interacts with protein 33K.

The protein resides in the virion. Its subcellular location is the host nucleus. It is found in the host nucleoplasm. It localises to the host nucleolus. In terms of biological role, component of the packaging machinery which encapsidates the viral DNA into preformed capsids and transcriptional activator of the viral major late promoter (MLP). Binds, along with packaging proteins 2 and 3, to the specific packaging sequence on the left end of viral genomic DNA and displays ATPase activity thereby providing the power stroke of the packaging machinery. The activity of packaging protein IVa2 is stimulated by protein 33K which acts as a terminase. May be the protein that pumps DNA into the capsid powered by ATP hydrolysis. Specifically binds to the 5'-CG-3' nucleotides of the repeats making up the packaging sequence. Component of the DEF-A and DEF-B transcription factors that bind downstream elements of the major late promoter (MLP), and stimulate transcription from the MLP after initiation of viral DNA replication. DEF-A is a heterodimer packaging proteins 1 and 2 and DEF-B is a homodimer of packaging protein 1. The polypeptide is Packaging protein 1 (Fowl adenovirus A serotype 1 (strain CELO / Phelps) (FAdV-1)).